A 115-amino-acid polypeptide reads, in one-letter code: Nitrogenase iron-iron protein delta chain (115 aa).

Hexamer of two alpha, two beta, and two delta chains. It depends on iron-sulfur cluster as a cofactor.

The enzyme catalyses N2 + 8 reduced [2Fe-2S]-[ferredoxin] + 16 ATP + 16 H2O = H2 + 8 oxidized [2Fe-2S]-[ferredoxin] + 2 NH4(+) + 16 ADP + 16 phosphate + 6 H(+). Functionally, the key enzymatic reactions in nitrogen fixation are catalyzed by the nitrogenase complex, which has 2 components: the iron protein (component 2) and a component 1 which is either a molybdenum-iron protein, a vanadium-iron, or an iron-iron protein. The polypeptide is Nitrogenase iron-iron protein delta chain (anfG) (Rhodobacter capsulatus (Rhodopseudomonas capsulata)).